A 391-amino-acid polypeptide reads, in one-letter code: Erythronate-4-phosphate dehydrogenase (391 aa).

Substrate contacts are provided by S45 and T67. The NAD(+) site is built by D147 and T176. Residue R209 is part of the active site. Position 238 (D238) interacts with NAD(+). The active site involves E243. The active-site Proton donor is H260. G263 contacts NAD(+). Y264 contacts substrate.

This sequence belongs to the D-isomer specific 2-hydroxyacid dehydrogenase family. PdxB subfamily. In terms of assembly, homodimer.

Its subcellular location is the cytoplasm. The enzyme catalyses 4-phospho-D-erythronate + NAD(+) = (R)-3-hydroxy-2-oxo-4-phosphooxybutanoate + NADH + H(+). It functions in the pathway cofactor biosynthesis; pyridoxine 5'-phosphate biosynthesis; pyridoxine 5'-phosphate from D-erythrose 4-phosphate: step 2/5. Catalyzes the oxidation of erythronate-4-phosphate to 3-hydroxy-2-oxo-4-phosphonooxybutanoate. The sequence is that of Erythronate-4-phosphate dehydrogenase from Photobacterium profundum (strain SS9).